A 1846-amino-acid polypeptide reads, in one-letter code: Peripheral-type benzodiazepine receptor-associated protein 1 (1846 aa).

Disordered stretches follow at residues 57-97 (EESS…GYSC), 281-318 (NQRE…DDVE), and 560-628 (GPKD…SEVE). Residues 576-587 (PKSSEPALTTLT) are compositionally biased toward polar residues. Positions 599 to 612 (SLSNSSRSESIHNS) are enriched in low complexity. In terms of domain architecture, SH3 1 spans 649 to 716 (ARIQVFLARY…PSNFVERVSD (68 aa)). The tract at residues 726 to 785 (ELADSSHSSGPELSFLSGGGGGCSSGGQSSGGRSQPRPEEEAAGDELSLSPPPEGLGEPL) is disordered. Over residues 742 to 755 (SGGGGGCSSGGQSS) the composition is skewed to gly residues. Fibronectin type-III domains are found at residues 787 to 878 (VPYP…AGAG), 880 to 972 (VPSQ…TLPA), and 977 to 1075 (APLD…PALA). Disordered stretches follow at residues 1084–1107 (SCLS…GLGD), 1163–1219 (EPTL…LDSG), 1243–1302 (HSRN…SDEE), 1322–1476 (SIPE…PESS), 1492–1617 (YDSE…QDLP), 1704–1755 (LTEA…AAQK), and 1812–1846 (VPSN…RVQC). The span at 1202–1219 (TQKKPSIEACHGGDLDSG) shows a compositional bias: basic and acidic residues. A compositionally biased stretch (acidic residues) spans 1251–1265 (DIQEEEEEEEEEEEE). Over residues 1270–1283 (PCSSQKQVAGNSIR) the composition is skewed to polar residues. Over residues 1324 to 1335 (PEEEEEEEEEEG) the composition is skewed to acidic residues. Composition is skewed to basic and acidic residues over residues 1411-1420 (RPQDPREHCS) and 1545-1577 (AWEK…ESRG). Positions 1616–1684 (LPVRVFVALF…PCNMVAEVAV (69 aa)) constitute an SH3 2 domain. Over residues 1705–1719 (TEASGNGPSVYSSAH) the composition is skewed to polar residues. In terms of domain architecture, SH3 3 spans 1755–1822 (KTSRPMVAAF…PSNFLEGPGP (68 aa)). Low complexity predominate over residues 1817–1830 (LEGPGPESGSLESG).

It belongs to the RIMBP family. Interacts with RIMS1 and RIMS2. Interacts with TSPO. Interacts with CACNA1A. Predominantly expressed in the brain.

It localises to the cytoplasm. The protein localises to the mitochondrion. In terms of biological role, required for synaptic transmission regulation. It probably controls the recruitement of voltage-gated calcium channels to the presynaptic membrane, and modulates neurotransmitter release. The polypeptide is Peripheral-type benzodiazepine receptor-associated protein 1 (Mus musculus (Mouse)).